Consider the following 170-residue polypeptide: MNKARIPIALQQAVMRCLREKLQLARQHFSVEFPEPKILYQQRGTSAGTAWLQAWEIRLNPVLLMENQQPFIDEVVPHELAHLLVFRQFGRVPPHGNEWRWMMESVLQVSASRTHQFEIASVQSKTYPYRCGCQLHQLTVRRHNRVMRGESEYRCRQCGDKLKFFAGEPV.

In terms of domain architecture, SprT-like spans 23-164 (QLARQHFSVE…CRQCGDKLKF (142 aa)). Histidine 78 serves as a coordination point for Zn(2+). Glutamate 79 is an active-site residue. Histidine 82 provides a ligand contact to Zn(2+).

It belongs to the SprT family. Zn(2+) is required as a cofactor.

It localises to the cytoplasm. The sequence is that of Protein SprT from Serratia proteamaculans (strain 568).